Consider the following 235-residue polypeptide: Ubiquinone biosynthesis O-methyltransferase (235 aa).

S-adenosyl-L-methionine is bound by residues Arg-39, Gly-59, Asp-80, and Met-124.

Belongs to the methyltransferase superfamily. UbiG/COQ3 family.

It catalyses the reaction a 3-demethylubiquinol + S-adenosyl-L-methionine = a ubiquinol + S-adenosyl-L-homocysteine + H(+). The catalysed reaction is a 3-(all-trans-polyprenyl)benzene-1,2-diol + S-adenosyl-L-methionine = a 2-methoxy-6-(all-trans-polyprenyl)phenol + S-adenosyl-L-homocysteine + H(+). It participates in cofactor biosynthesis; ubiquinone biosynthesis. Functionally, O-methyltransferase that catalyzes the 2 O-methylation steps in the ubiquinone biosynthetic pathway. In Photobacterium profundum (strain SS9), this protein is Ubiquinone biosynthesis O-methyltransferase.